A 322-amino-acid polypeptide reads, in one-letter code: Cytochrome c biogenesis protein CcsA (322 aa).

Transmembrane regions (helical) follow at residues 2 to 22, 44 to 64, 68 to 88, 143 to 163, 226 to 246, 260 to 274, and 289 to 309; these read LFAT…SIVI, GMIA…LSSG, LSNL…LHTI, MLLS…ILII, VISL…VWAN, TWAF…IYLH, and VASI…LLGI.

This sequence belongs to the CcmF/CycK/Ccl1/NrfE/CcsA family. As to quaternary structure, may interact with Ccs1.

Its subcellular location is the plastid. The protein localises to the chloroplast thylakoid membrane. In terms of biological role, required during biogenesis of c-type cytochromes (cytochrome c6 and cytochrome f) at the step of heme attachment. This is Cytochrome c biogenesis protein CcsA from Brachypodium distachyon (Purple false brome).